A 345-amino-acid polypeptide reads, in one-letter code: Phosphoribosylformylglycinamidine cyclo-ligase (345 aa).

This sequence belongs to the AIR synthase family.

The protein resides in the cytoplasm. It carries out the reaction 2-formamido-N(1)-(5-O-phospho-beta-D-ribosyl)acetamidine + ATP = 5-amino-1-(5-phospho-beta-D-ribosyl)imidazole + ADP + phosphate + H(+). It participates in purine metabolism; IMP biosynthesis via de novo pathway; 5-amino-1-(5-phospho-D-ribosyl)imidazole from N(2)-formyl-N(1)-(5-phospho-D-ribosyl)glycinamide: step 2/2. In Salmonella typhi, this protein is Phosphoribosylformylglycinamidine cyclo-ligase.